The sequence spans 226 residues: DNA mismatch repair protein MutH (226 aa).

It belongs to the MutH family.

The protein localises to the cytoplasm. Its function is as follows. Sequence-specific endonuclease that cleaves unmethylated GATC sequences. It is involved in DNA mismatch repair. The polypeptide is DNA mismatch repair protein MutH (Haemophilus ducreyi (strain 35000HP / ATCC 700724)).